An 833-amino-acid chain; its full sequence is V-type proton ATPase 116 kDa subunit a 4 (833 aa).

The Cytoplasmic segment spans residues 1-390 (MASVFRSEEM…DAYGVGSYRE (390 aa)). A helical transmembrane segment spans residues 391–409 (INPAPYTIITFPFLFAVMF). The Vacuolar segment spans residues 410–411 (GD). A helical transmembrane segment spans residues 412 to 428 (CGHGMVMLMAALWMVLN). Residues 429-443 (ERHLLAQKSTNEMWN) are Cytoplasmic-facing. The helical transmembrane segment at 444 to 473 (IFFNGRYLILLMGIFSIYTGLIYNDCFSKS) threads the bilayer. At 474–538 (FNIFGSSWSV…ASNKLTFLNS (65 aa)) the chain is on the vacuolar side. Residues 539 to 558 (YKMKMSVILGIAHMIFGVIL) traverse the membrane as a helical segment. The Cytoplasmic portion of the chain corresponds to 559–576 (SLFNHIYFRRTLNIILQF). A helical transmembrane segment spans residues 577-597 (IPEMIFMLSLFGYLVFMIIFK). Topologically, residues 598-642 (WCRYDAHTSRKAPSILIHFIGMFLFDYDDSSNAPLYGHQQEVQTF) are vacuolar. Residues 643–662 (FVIIALVSVPWMLLIKPFVL) traverse the membrane as a helical segment. The Cytoplasmic portion of the chain corresponds to 663 to 720 (RAKHQKSQLQSFTIHEDAVEGDHSGHSSKKTAGAHGMKDGHEEEFNFGDIFVHQAIHT). A disordered region spans residues 681-700 (VEGDHSGHSSKKTAGAHGMK). Residues 721-745 (IEYCLGCISNTASYLRLWALSLAHA) form a helical membrane-spanning segment. Residues 746–766 (ELSEVLWTMVMSIGLRLQGWA) are Vacuolar-facing. A helical transmembrane segment spans residues 767–805 (GLVGVFIIFAVFAVLTVAILLVMEGLSAFLHALRLHWVE). The Cytoplasmic segment spans residues 806–833 (FQNKFYEGAGSKFSPFSFKHVLEGTAEE).

Belongs to the V-ATPase 116 kDa subunit family. V-ATPase is a heteromultimeric enzyme made up of two complexes: the ATP-hydrolytic V1 complex and the proton translocation V0 complex. The V1 complex consists of three catalytic AB heterodimers that form a heterohexamer, three peripheral stalks each consisting of EG heterodimers, one central rotor including subunits D and F, and the regulatory subunits C and H. The proton translocation complex V0 consists of the proton transport subunit a, a ring of proteolipid subunits c9c'', rotary subunit d, subunits e and f, and the accessory subunits ATP6AP1/Ac45 and ATP6AP2/PRR. Interacts with the V1 complex V-ATPase subunit A ATP6V1A. Interacts with the V0 complex V-ATPase subunit c ATP6V0C. As to expression, specifically expressed in kidney, but not in the heart, brain, spleen, lung, liver, muscle, or testis. Distribution within the kidney appears more widespread than that seen in man. High intensity staining at the surface of intercalated cells, with additional expression in the proximal tubule.

It is found in the apical cell membrane. Its subcellular location is the basolateral cell membrane. Functionally, subunit of the V0 complex of vacuolar(H+)-ATPase (V-ATPase), a multisubunit enzyme composed of a peripheral complex (V1) that hydrolyzes ATP and a membrane integral complex (V0) that translocates protons. V-ATPase is responsible for acidifying and maintaining the pH of intracellular compartments and in some cell types, is targeted to the plasma membrane, where it is responsible for acidifying the extracellular environment. Involved in normal vectorial acid transport into the urine by the kidney. This is V-type proton ATPase 116 kDa subunit a 4 (Atp6v0a4) from Mus musculus (Mouse).